The sequence spans 407 residues: MSNETKKTGVKKVVLAYSGGLDTSAIIPWLKETYDNCEIIAFCADVGQGDAELEGLHEKAISSGASECYIVDLKEELVADYIYPTIATGAIYEGTYLLGTSMARPIIAKAQVEVARKVGADAVCHGCTGKGNDQVRFEGCFAALAPDLKVIAPWREWEMVSREDLLDYLAERNIETTSSVTKIYSRDANAWHISHEGGELEDPWNEPTKGVWTMTVAPEDAPNEPEYVSLELEQGKITKVNGASLSPYGALTVLNEIAGAHGVGRIDITENRLVGMKSRGCYETPGGTVMFAALRAIEELVLDKSSREWREQIGAQMAHLVYDGRWFTPLCESLLAASIPLANLVSGEVVIKLYKGQAHAVKKRSENSLYSEEFATFGEDDVYNQKDAEGFIRLYSLASRIRALKAK.

Residues A16–S24 and A44 each bind ATP. Y96 and S101 together coordinate L-citrulline. G126 contacts ATP. Residues T128, N132, and D133 each contribute to the L-aspartate site. N132 contributes to the L-citrulline binding site. Positions 136, 185, 194, 270, and 282 each coordinate L-citrulline.

This sequence belongs to the argininosuccinate synthase family. Type 1 subfamily. As to quaternary structure, homotetramer.

It localises to the cytoplasm. It carries out the reaction L-citrulline + L-aspartate + ATP = 2-(N(omega)-L-arginino)succinate + AMP + diphosphate + H(+). It functions in the pathway amino-acid biosynthesis; L-arginine biosynthesis; L-arginine from L-ornithine and carbamoyl phosphate: step 2/3. This chain is Argininosuccinate synthase, found in Shewanella sediminis (strain HAW-EB3).